Reading from the N-terminus, the 638-residue chain is DNA repair protein rhp41 (638 aa).

Belongs to the XPC family.

It is found in the nucleus. Has a role in the nucleotide excision repair (NER) pathway. Acts in both transcription-coupled repair (TCR) which removes damage from the transcribed strand of active genes and in global genome repair (GGR) which removes damage in untranscribed DNA. Involved in the repair of UV-induced damages where it is involved in the removal of cyclobutane pyrimidine dimers (CPDs). This Schizosaccharomyces pombe (strain 972 / ATCC 24843) (Fission yeast) protein is DNA repair protein rhp41 (rhp41).